A 1648-amino-acid polypeptide reads, in one-letter code: Kinesin-like protein KIF14 (1648 aa).

Residues 1-27 are disordered; it reads MSLHSTHNRNNSGDILDIPSSQNSSSL. The segment at 1-356 is required for PRC1-binding; it reads MSLHSTHNRN…AGKDPLKVEN (356 aa). Ser-12 and Ser-272 each carry phosphoserine. Phosphothreonine is present on Thr-277. Residue Ser-346 is modified to Phosphoserine. The tract at residues 356–737 is required for microtubule-binding with high affinity; that stretch reads NSQVTVAVRV…AAQRNSRNID (382 aa). Residues 358–701 enclose the Kinesin motor domain; sequence QVTVAVRVRP…LRYANQARLI (344 aa). 447–454 serves as a coordination point for ATP; sequence GQTGSGKS. Residues 705 to 791 adopt a coiled-coil conformation; that stretch reads AKVNEDMNAK…QETKELQKAG (87 aa). The FHA domain occupies 825 to 891; sequence TTVGKYKPNS…LRHGDRVILG (67 aa). The segment at 901-1648 is required for CIT-binding; it reads PVEVQKGKRP…ECTPSRIQWV (748 aa). Thr-915 is modified (phosphothreonine). Residues 922-1079 adopt a coiled-coil conformation; it reads KDFEFAKNEL…QNRNNRDKTF (158 aa). A phosphoserine mark is found at Ser-937 and Ser-1292. Coiled coils occupy residues 1332–1348 and 1468–1500; these read TNIA…VKKL and ENIF…VNRA. The interval 1600–1648 is disordered; it reads NTKEEHQQSKSSGIDGSKNKGVPKRVYELHGSSPAVSSEECTPSRIQWV. A compositionally biased stretch (polar residues) spans 1633-1648; that stretch reads PAVSSEECTPSRIQWV.

The protein belongs to the TRAFAC class myosin-kinesin ATPase superfamily. Kinesin family. Directly interacts with PRC1 within a complex also containing KIF4A, KIF20A and KIF23; targets to the central spindle. Directly interacts with CIT depending on the activation state of the kinase (stronger interaction with the kinase-dead form); targets to the midbody. Interacts with ARRB2; the interaction is detected in the nucleus upon OR1D2 stimulation. Interacts with AKT1; the interaction is detected in the plasma membrane upon INS stimulation and promotes AKT1 phosphorylation. Interacts with SVIL; at midbody during cytokinesis. Interacts with RADIL (via PDZ domain); recruits RADIL to the microtubule network restricting RADIL from interaction with activated RAP1A.

Its subcellular location is the nucleus. The protein resides in the cytoplasm. It is found in the cytoskeleton. The protein localises to the spindle. It localises to the midbody. Functionally, microtubule motor protein that binds to microtubules with high affinity through each tubulin heterodimer and has an ATPase activity. Plays a role in many processes like cell division, cytokinesis and also in cell proliferation and apoptosis. During cytokinesis, targets to central spindle and midbody through its interaction with PRC1 and CIT respectively. Regulates cell growth through regulation of cell cycle progression and cytokinesis. During cell cycle progression acts through SCF-dependent proteasomal ubiquitin-dependent protein catabolic process which controls CDKN1B degradation, resulting in positive regulation of cyclins, including CCNE1, CCND1 and CCNB1. During late neurogenesis, regulates the cerebellar, cerebral cortex and olfactory bulb development through regulation of apoptosis, cell proliferation and cell division. Also is required for chromosome congression and alignment during mitotic cell cycle process. Regulates cell spreading, focal adhesion dynamics, and cell migration through its interaction with RADIL resulting in regulation of RAP1A-mediated inside-out integrin activation by tethering RADIL on microtubules. The chain is Kinesin-like protein KIF14 from Homo sapiens (Human).